The following is a 356-amino-acid chain: Protein pelota homolog (356 aa).

The protein belongs to the eukaryotic release factor 1 family. Pelota subfamily. Monomer. A divalent metal cation serves as cofactor.

The protein resides in the cytoplasm. In terms of biological role, may function in recognizing stalled ribosomes, interact with stem-loop structures in stalled mRNA molecules, and effect endonucleolytic cleavage of the mRNA. May play a role in the release non-functional ribosomes and degradation of damaged mRNAs. Has endoribonuclease activity. The sequence is that of Protein pelota homolog from Aeropyrum pernix (strain ATCC 700893 / DSM 11879 / JCM 9820 / NBRC 100138 / K1).